Reading from the N-terminus, the 2325-residue chain is MKKGSQQKIFSKAKIPSSSHSPIPSSMSNMRSRSLSPLIGSETLPFHSGGQWCEQVEIADENNMLLDYQDHKGADSHAGVRYITEALIKKLTKQDNLALIKSLNLSLSKDGGKKFKYIENLEKCVKLEVLNLSYNLIGKIEKLDKLLKLRELNLSYNKISKIEGIENMCNLQKLNLAGNEIEHIPVWLGKKLKSLRVLNLKGNKISSLQDISKLKPLQDLISLILVENPVVTLPHYLQFTIFHLRSLESLEGQPVTTQDRQEAFERFSLEEVERLERDLEKKMIETEELKSKQTRFLEEIKNQDKLNKSLKEEAMLQKQSCEELKSDLNTKNELLKQKTIELTRACQKQYELEQELAFYKIDAKFEPLNYYPSEYAEIDKAPDESPYIGKSRYKRNMFATESYIIDSAQAVQIKKMEPDEQLRNDHMNLRGHTPLDTQLEDKEKKISAAQTRLSELHDEIEKAEQQILRATEEFKQLEEAIQLKKISEAGKDLLYKQLSGRLQLVNKLRQEALDLELQMEKQKQEIAGKQKEIKDLQIAIDSLDSKDPKHSHMKAQKSGKEQQLDIMNKQYQQLESRLDEILSRIAKETEEIKDLEEQLTEGQIAANEALKKDLEGVISGLQEYLGTIKGQATQAQNECRKLRDEKETLLQRLTEVEQERDQLEIVAMDAENMRKELAELESALQEQHEVNASLQQTQGDLSAYEAELEARLNLRDAEANQLKEELEKVTRLTQLEQSALQAELEKERQALKNALGKAQFSEEKEQENSELHAKLKHLQDDNNLLKQQLKDFQNHLNHVVDGLVRPEEVAARVDELRRKLKLGTGEMNIHSPSDVLGKSLADLQKQFSEILARSKWERDEAQVRERKLQEEMALQQEKLATGQEEFRQACERALEARMNFDKRQHEARIQQMENEIHYLQENLKSMEEIQGLTDLQLQEADEEKERILAQLRELEKKKKLEDAKSQEQVFGLDKELKKLKKAVATSDKLATAELTIAKDQLKSLHGTVMKINQERAEELQEAERFSRKAAQAARDLTRAEAEIELLQNLLRQKGEQFRLEMEKTGVGTGANSQVLEIEKLNETMERQRTEIARLQNVLDLTGSDNKGGFENVLEEIAELRREVSYQNDYISSMADPFKRRGYWYFMPPPPSSKVSSHSSQATKDSGVGLKYSASTPVRKPRPGQQDGKEGSQPPPASGYWVYSPIRSGLHKLFPSRDADSGGDSQEESELDDQEEPPFVPPPGYMMYTVLPDGSPVPQGMALYAPPPPLPNNSRPLTPGTVVYGPPPAGAPMVYGPPPPNFSIPFIPMGVLHCNVPEHHNLENEVSRLEDIMQHLKSKKREERWMRASKRQSEKEMEELHHNIDDLLQEKKSLECEVEELHRTVQKRQQQKDFIDGNVESLMTELEIEKSLKHHEDIVDEIECIEKTLLKRRSELREADRLLAEAESELSCTKEKTKNAVEKFTDAKRSLLQTESDAEELERRAQETAVNLVKADQQLRSLQADAKDLEQHKIKQEEILKEINKIVAAKDSDFQCLSKKKEKLTEELQKLQKDIEMAERNEDHHLQVLKESEVLLQAKRAELEKLKSQVTSQQQEMAVLDRQLGHKKEELHLLQGSMVQAKADLQEALRLGETEVTEKCNHIREVKSLLEELSFQKGELNVQISERKTQLTLIKQEIEKEEENLQVVLRQMSKHKTELKNILDMLQLENHELQGLKLQHDQRVSELEKTQVAVLEEKLELENLQQISQQQKGEIEWQKQLLERDKREIERMTAESRALQSCVECLSKEKEDLQEKCDIWEKKLAQTKRVLAAAEENSKMEQSNLEKLELNVRKLQQELDQLNRDKLSLHNDISAMQQQLQEKREAVNSLQEELANVQDHLNLAKQDLLHTTKHQDVLLSEQTRLQKDISEWANRFEDCQKEEETKQQQLQVLQNEIEENKLKLVQQEMMFQRLQKERESEESKLETSKVTLKEQQHQLEKELTDQKSKLDQVLSKVLAAEERVRTLQEEERWCESLEKTLSQTKRQLSEREQQLVEKSGELLALQKEADSMRADFSLLRNQFLTERKKAEKQVASLKEALKIQRSQLEKNLLEQKQENSCIQKEMATIELVAQDNHERARRLMKELNQMQYEYTELKKQMANQKDLERRQMEISDAMRTLKSEVKDEIRTSLKNLNQFLPELPADLEAILERNENLEGELESLKENLPFTMNEGPFEEKLNFSQVHIMDEHWRGEALREKLRHREDRLKAQLRHCMSKQAEVLIKGKRQTEGTLHSLRRQVDALGELVTSTSADSASSPSLSQLESSLTEDSQLGQNQEKNASAR.

The segment at 1-33 is disordered; sequence MKKGSQQKIFSKAKIPSSSHSPIPSSMSNMRSR. The span at 16–33 shows a compositional bias: low complexity; it reads PSSSHSPIPSSMSNMRSR. LRR repeat units lie at residues 126-147, 148-169, 170-191, and 194-215; these read KLEV…DKLL, KLRE…ENMC, NLQK…LGKK, and SLRV…SKLK. The region spanning 228–266 is the LRRCT domain; it reads NPVVTLPHYLQFTIFHLRSLESLEGQPVTTQDRQEAFER. Coiled coils occupy residues 267–343 and 435–799; these read FSLE…IELT and LDTQ…LNHV. Ser831 bears the Phosphoserine mark. Positions 851 to 1101 form a coiled coil; the sequence is LARSKWERDE…ARLQNVLDLT (251 aa). A disordered region spans residues 1150–1241; sequence PSSKVSSHSS…DQEEPPFVPP (92 aa). Residues 1224–1235 show a composition bias toward acidic residues; the sequence is SQEESELDDQEE. Residues 1317–2255 adopt a coiled-coil conformation; the sequence is EHHNLENEVS…DRLKAQLRHC (939 aa). The residue at position 1475 (Ser1475) is a Phosphoserine. Positions 1948 to 2118 are required for centrosome localization; the sequence is MMFQRLQKER…ELVAQDNHER (171 aa). Residues 1985 to 2325 are sufficient for interaction with HOOK2; the sequence is QKSKLDQVLS…QNQEKNASAR (341 aa). The tract at residues 2288–2325 is disordered; that stretch reads VTSTSADSASSPSLSQLESSLTEDSQLGQNQEKNASAR. Low complexity predominate over residues 2290–2314; sequence STSADSASSPSLSQLESSLTEDSQL. Polar residues predominate over residues 2315–2325; it reads GQNQEKNASAR.

In terms of assembly, interacts with HOOK2. Interacts with EXOC6 and SNAPIN. Associates with the exocyst complex. Widely expressed with highest levels in testis and trachea.

It localises to the cytoplasm. It is found in the cytoskeleton. The protein resides in the microtubule organizing center. The protein localises to the centrosome. Its subcellular location is the midbody. It localises to the midbody ring. Its function is as follows. Involved in cell cycle progression and cytokinesis. During the late steps of cytokinesis, anchors exocyst and SNARE complexes at the midbody, thereby allowing secretory vesicle-mediated abscission. The protein is Centriolin (CNTRL) of Homo sapiens (Human).